We begin with the raw amino-acid sequence, 228 residues long: MNASDLIRIMQFGDSVLPVGAFTFSNGVESAIQTGIVHDVATLKGFVLTALKQAASCDGMGVVAAHRAVVADDRDGIIRADWAVNNRKLNEESRLMATRMGKKLAEMSIHVVEHPLISWWLEQIKNGNTAGTYPVTQAVVMAAQGIGQREVVVMHQYGVAMTILSAAMRLMRVTHFDTQHILFELNHDIEKFCDIAEIGDINQMSSYVPIVDVLAAVHVKAHVRLFSN.

The protein belongs to the UreF family. UreD, UreF and UreG form a complex that acts as a GTP-hydrolysis-dependent molecular chaperone, activating the urease apoprotein by helping to assemble the nickel containing metallocenter of UreC. The UreE protein probably delivers the nickel.

Its subcellular location is the cytoplasm. Functionally, required for maturation of urease via the functional incorporation of the urease nickel metallocenter. The sequence is that of Urease accessory protein UreF from Yersinia pseudotuberculosis serotype IB (strain PB1/+).